A 635-amino-acid polypeptide reads, in one-letter code: Chaperone protein HtpG (635 aa).

Residues 1 to 344 (MSETATTNKE…SNDLPLNVSR (344 aa)) are a; substrate-binding. The segment at 345–561 (EILQDNKITQ…DYEMGTQMAK (217 aa)) is b. A c region spans residues 562–635 (LLAAAGQPVP…AVNQLLAPSH (74 aa)).

This sequence belongs to the heat shock protein 90 family. As to quaternary structure, homodimer.

Its subcellular location is the cytoplasm. In terms of biological role, molecular chaperone. Has ATPase activity. In Vibrio cholerae serotype O1 (strain ATCC 39541 / Classical Ogawa 395 / O395), this protein is Chaperone protein HtpG.